The sequence spans 96 residues: Protein RnfH (96 aa).

The protein belongs to the UPF0125 (RnfH) family.

The chain is Protein RnfH from Escherichia fergusonii (strain ATCC 35469 / DSM 13698 / CCUG 18766 / IAM 14443 / JCM 21226 / LMG 7866 / NBRC 102419 / NCTC 12128 / CDC 0568-73).